The primary structure comprises 249 residues: DNA polymerase sliding clamp (249 aa).

It belongs to the PCNA family. As to quaternary structure, homotrimer. The subunits circularize to form a toroid; DNA passes through its center. Replication factor C (RFC) is required to load the toroid on the DNA.

In terms of biological role, sliding clamp subunit that acts as a moving platform for DNA processing. Responsible for tethering the catalytic subunit of DNA polymerase and other proteins to DNA during high-speed replication. The chain is DNA polymerase sliding clamp from Thermococcus onnurineus (strain NA1).